The chain runs to 886 residues: Alanine--tRNA ligase (886 aa).

Residues His568, His572, Cys670, and His674 each coordinate Zn(2+).

This sequence belongs to the class-II aminoacyl-tRNA synthetase family. It depends on Zn(2+) as a cofactor.

The protein localises to the cytoplasm. It carries out the reaction tRNA(Ala) + L-alanine + ATP = L-alanyl-tRNA(Ala) + AMP + diphosphate. Catalyzes the attachment of alanine to tRNA(Ala) in a two-step reaction: alanine is first activated by ATP to form Ala-AMP and then transferred to the acceptor end of tRNA(Ala). Also edits incorrectly charged Ser-tRNA(Ala) and Gly-tRNA(Ala) via its editing domain. This chain is Alanine--tRNA ligase, found in Prochlorococcus marinus (strain NATL2A).